Here is an 886-residue protein sequence, read N- to C-terminus: DNA mismatch repair protein MutS (886 aa).

626-633 (GPNMGGKS) contributes to the ATP binding site.

Belongs to the DNA mismatch repair MutS family.

Functionally, this protein is involved in the repair of mismatches in DNA. It is possible that it carries out the mismatch recognition step. This protein has a weak ATPase activity. This chain is DNA mismatch repair protein MutS, found in Burkholderia ambifaria (strain ATCC BAA-244 / DSM 16087 / CCUG 44356 / LMG 19182 / AMMD) (Burkholderia cepacia (strain AMMD)).